Consider the following 283-residue polypeptide: Shikimate dehydrogenase (NADP(+)) (283 aa).

Residues 18–20 (SYS) and Thr-66 contribute to the shikimate site. The Proton acceptor role is filled by Lys-70. Residues Asn-91 and Asp-106 each coordinate shikimate. NADP(+)-binding positions include 130–134 (GAGGA) and Met-225. A shikimate-binding site is contributed by Tyr-227. Gly-248 is a binding site for NADP(+).

Belongs to the shikimate dehydrogenase family. Homodimer.

It carries out the reaction shikimate + NADP(+) = 3-dehydroshikimate + NADPH + H(+). Its pathway is metabolic intermediate biosynthesis; chorismate biosynthesis; chorismate from D-erythrose 4-phosphate and phosphoenolpyruvate: step 4/7. Functionally, involved in the biosynthesis of the chorismate, which leads to the biosynthesis of aromatic amino acids. Catalyzes the reversible NADPH linked reduction of 3-dehydroshikimate (DHSA) to yield shikimate (SA). The polypeptide is Shikimate dehydrogenase (NADP(+)) (Pelodictyon phaeoclathratiforme (strain DSM 5477 / BU-1)).